Reading from the N-terminus, the 193-residue chain is Imidazoleglycerol-phosphate dehydratase (193 aa).

It belongs to the imidazoleglycerol-phosphate dehydratase family.

It localises to the cytoplasm. It catalyses the reaction D-erythro-1-(imidazol-4-yl)glycerol 3-phosphate = 3-(imidazol-4-yl)-2-oxopropyl phosphate + H2O. It participates in amino-acid biosynthesis; L-histidine biosynthesis; L-histidine from 5-phospho-alpha-D-ribose 1-diphosphate: step 6/9. The polypeptide is Imidazoleglycerol-phosphate dehydratase (Saccharolobus islandicus (strain M.14.25 / Kamchatka #1) (Sulfolobus islandicus)).